The sequence spans 408 residues: ORC1-type DNA replication protein 15 (408 aa).

ATP contacts are provided by residues 60 to 64 (VGKTA), Y208, and R220.

It belongs to the CDC6/cdc18 family.

Its function is as follows. Involved in regulation of DNA replication. In Haloarcula marismortui (strain ATCC 43049 / DSM 3752 / JCM 8966 / VKM B-1809) (Halobacterium marismortui), this protein is ORC1-type DNA replication protein 15 (cdc6o).